The primary structure comprises 845 residues: ATP-binding cassette sub-family F member 1 (845 aa).

The tract at residues 1–261 is disordered; sequence MPKAPKQQPP…HLSKKEKKKL (261 aa). A phosphoserine mark is found at serine 22 and serine 24. The span at 29–39 shows a compositional bias: basic residues; it reads KKGKKDKKIKK. A compositionally biased stretch (basic and acidic residues) spans 47 to 64; it reads VEDKQAGEEEKVLKEKEQ. Basic residues predominate over residues 73-85; sequence QKKKRDTRKGRRK. Serine 105 is modified (phosphoserine). Threonine 108 carries the post-translational modification Phosphothreonine. Residues serine 109 and serine 140 each carry the phosphoserine; by CK2 modification. Over residues 147–160 the composition is skewed to basic and acidic residues; it reads EKHPPKPAKPEKNR. Residue serine 166 is modified to Phosphoserine. Over residues 206–226 the composition is skewed to basic and acidic residues; the sequence is EIIKEKEPPKQGKEKAKKAEQ. Residues 227–241 are compositionally biased toward acidic residues; that stretch reads GSEEEGEGEEEEEEG. Serine 228 is subject to Phosphoserine. Residues 304–548 enclose the ABC transporter 1 domain; sequence IKLEKFSISA…MYQQKQKELL (245 aa). 336 to 343 is an ATP binding site; that stretch reads GPNGKGKT. Residues 559 to 580 are compositionally biased toward basic and acidic residues; it reads KELKAGGKSTKQAEKQTKEALT. A disordered region spans residues 559–602; it reads KELKAGGKSTKQAEKQTKEALTRKQQKCRRKNQDEESQEAPELL. Serine 595 is modified (phosphoserine). Positions 625–840 constitute an ABC transporter 2 domain; it reads LGLHGVTFGY…VLEALGEVMV (216 aa). 658–665 serves as a coordination point for ATP; that stretch reads GPNGVGKS.

It belongs to the ABC transporter superfamily. ABCF family. EF3 subfamily. As to quaternary structure, isoform 2 interacts (via N-terminus) with EIF2S1; the interaction is independent of its phosphorylated status. Isoform 2 associates (via both ABC transporter domains) with the ribosomes. In terms of processing, isoform 2 is phosphorylated at phosphoserine and phosphothreonine. Isoform 2 phosphorylation on Ser-109 and Ser-140 by CK2 inhibits association of EIF2 with ribosomes. Ubiquitous.

Its subcellular location is the cytoplasm. It is found in the nucleus. The protein localises to the nucleoplasm. The protein resides in the nucleus envelope. Its function is as follows. Isoform 2 is required for efficient Cap- and IRES-mediated mRNA translation initiation. Isoform 2 is not involved in the ribosome biogenesis. This is ATP-binding cassette sub-family F member 1 (ABCF1) from Homo sapiens (Human).